The sequence spans 1414 residues: Alpha-(1-&gt;3)-arabinofuranosyltransferase (1414 aa).

9 helical membrane-spanning segments follow: residues 57-77 (YLFPHGTFFLLGDVLGVPGWV), 81-101 (LWWALLLTVGFWGVLRVAEAL), 128-148 (AISSETLPMMLAPWVLLPVIL), 167-187 (VALMGAVNAVATLTGCLAAVI), 203-223 (AWWLLCGALAVTWWVVALLML), 273-293 (STTAVLATTVVAAAGLAGLAL), 302-322 (LITMLLIGVVLLGLGYSGGLG), 352-372 (LPLALGLVHLLGRIPLPGSAP), and 389-409 (VAVAIVVLSALAAGTSLAWTA). In terms of domain architecture, F5/8 type C spans 687 to 845 (YPSDGADLVY…QYDASGFAHP (159 aa)). 4 helical membrane passes run 1253–1273 (VGLIGGLALLPLLALLALIPV), 1297–1317 (ALVAGTAISGVAGLLVVGAAM), 1333–1353 (VWDNVTVVVAAGGLILAGSVL), and 1364–1384 (YVGHTPGVQFLALLSVAFLAA). The disordered stretch occupies residues 1393–1414 (PEPSEDGRSAKPEHTGASAHAG). Residues 1394–1406 (EPSEDGRSAKPEH) show a composition bias toward basic and acidic residues.

It localises to the membrane. It carries out the reaction Adds an alpha-D-arabinofuranosyl group from trans,octacis-decaprenylphospho-beta-D-arabinofuranose at the 3-O-position of an alpha-(1-&gt;5)-arabinofuranan chain attached to a beta-(1-&gt;5)-galactofuranan chain.. The protein operates within cell wall biogenesis; cell wall polysaccharide biosynthesis. Functionally, involved in the biosynthesis of the arabinogalactan (AG) region of the mycolylarabinogalactan-peptidoglycan (mAGP) complex, an essential component of the mycobacterial cell wall. Catalyzes the addition of an arabinofuranosyl (Araf) residue from the sugar donor decaprenyl-phospho-arabinose (DPA) on the C-3 of an alpha-(1-&gt;5)-linked Araf from the arabinan backbone of AG. The chain is Alpha-(1-&gt;3)-arabinofuranosyltransferase (aftD) from Mycolicibacterium smegmatis (strain ATCC 700084 / mc(2)155) (Mycobacterium smegmatis).